A 61-amino-acid polypeptide reads, in one-letter code: Small ribosomal subunit protein uS14 (61 aa).

Positions 24, 27, 40, and 43 each coordinate Zn(2+).

It belongs to the universal ribosomal protein uS14 family. Zinc-binding uS14 subfamily. As to quaternary structure, part of the 30S ribosomal subunit. Contacts proteins S3 and S10. The cofactor is Zn(2+).

Functionally, binds 16S rRNA, required for the assembly of 30S particles and may also be responsible for determining the conformation of the 16S rRNA at the A site. The protein is Small ribosomal subunit protein uS14 of Thermobifida fusca (strain YX).